The chain runs to 94 residues: MDKSKRLFLKSKRSFRRRLPPIQSGDRIDYRNMSLISRFISEQGKILSRRVNRLSLKQQRLITIAIKQARILSSLPFLNNEKQFEKKRVGRYNY.

It belongs to the bacterial ribosomal protein bS18 family. In terms of assembly, part of the 30S ribosomal subunit.

Its subcellular location is the plastid. The protein resides in the chloroplast. This Manihot esculenta (Cassava) protein is Small ribosomal subunit protein bS18c.